The sequence spans 122 residues: Small ribosomal subunit protein uS13 (122 aa).

A disordered region spans residues 93–122 (RRGLPVRGQRTKTNARTRKGPKKTIAGKKK).

This sequence belongs to the universal ribosomal protein uS13 family. Part of the 30S ribosomal subunit. Forms a loose heterodimer with protein S19. Forms two bridges to the 50S subunit in the 70S ribosome.

Functionally, located at the top of the head of the 30S subunit, it contacts several helices of the 16S rRNA. In the 70S ribosome it contacts the 23S rRNA (bridge B1a) and protein L5 of the 50S subunit (bridge B1b), connecting the 2 subunits; these bridges are implicated in subunit movement. Contacts the tRNAs in the A and P-sites. The protein is Small ribosomal subunit protein uS13 of Corynebacterium jeikeium (strain K411).